Consider the following 75-residue polypeptide: Small ribosomal subunit protein bS18 (75 aa).

It belongs to the bacterial ribosomal protein bS18 family. In terms of assembly, part of the 30S ribosomal subunit. Forms a tight heterodimer with protein bS6.

Functionally, binds as a heterodimer with protein bS6 to the central domain of the 16S rRNA, where it helps stabilize the platform of the 30S subunit. The sequence is that of Small ribosomal subunit protein bS18 from Shewanella baltica (strain OS223).